Reading from the N-terminus, the 149-residue chain is Transcriptional repressor NrdR (149 aa).

A zinc finger lies at Cys-3–Cys-33. Residues Ile-48–Ser-138 enclose the ATP-cone domain.

This sequence belongs to the NrdR family. The cofactor is Zn(2+).

Functionally, negatively regulates transcription of bacterial ribonucleotide reductase nrd genes and operons by binding to NrdR-boxes. In Fusobacterium nucleatum subsp. nucleatum (strain ATCC 25586 / DSM 15643 / BCRC 10681 / CIP 101130 / JCM 8532 / KCTC 2640 / LMG 13131 / VPI 4355), this protein is Transcriptional repressor NrdR.